Reading from the N-terminus, the 219-residue chain is MGDSSSSTSWSSKKDTEDDRMIAFMLSEEYSKLDGAVGRRLSNLAPVPHVPRINCYIPNLNDATLDHQRLLQRLNVYGLCELKVSGDGNCQFRALSDQLYRSPEYHKQVRREVVKQLKECRSMYESYVPMKYKRYYKKMGKFGEWGDHITLQAAADRFAAKICLLTSFRDTCFIEIIPQYQAPKGVLWLSFWSEVHYNSLYDIQAAPVQHKPKRKHWLF.

Positions 79–203 (LCELKVSGDG…EVHYNSLYDI (125 aa)) constitute an OTU domain. Asp-87 is an active-site residue. Residue Cys-90 is the Nucleophile of the active site. His-196 is a catalytic residue.

Belongs to the peptidase C85 family.

The enzyme catalyses Thiol-dependent hydrolysis of ester, thioester, amide, peptide and isopeptide bonds formed by the C-terminal Gly of ubiquitin (a 76-residue protein attached to proteins as an intracellular targeting signal).. Functionally, hydrolase that can remove conjugated ubiquitin from proteins in vitro and may therefore play an important regulatory role at the level of protein turnover by preventing degradation. Inactive cysteine protease. The sequence is that of OVARIAN TUMOR DOMAIN-containing deubiquitinating enzyme 12 from Arabidopsis thaliana (Mouse-ear cress).